Consider the following 213-residue polypeptide: Large ribosomal subunit protein uL3 (213 aa).

Residue Gln151 is modified to N5-methylglutamine.

The protein belongs to the universal ribosomal protein uL3 family. In terms of assembly, part of the 50S ribosomal subunit. Forms a cluster with proteins L14 and L19. In terms of processing, methylated by PrmB.

Its function is as follows. One of the primary rRNA binding proteins, it binds directly near the 3'-end of the 23S rRNA, where it nucleates assembly of the 50S subunit. The sequence is that of Large ribosomal subunit protein uL3 from Rhizobium johnstonii (strain DSM 114642 / LMG 32736 / 3841) (Rhizobium leguminosarum bv. viciae).